A 600-amino-acid polypeptide reads, in one-letter code: Zinc metalloproteinase-disintegrin-like stejnihagin-A (600 aa).

Positions Met-1 to Ser-20 are cleaved as a signal peptide. Positions Ile-21–Glu-191 are excised as a propeptide. Gln-192 is subject to Pyrrolidone carboxylic acid. Positions Arg-198–Pro-389 constitute a Peptidase M12B domain. Cystine bridges form between Cys-306/Cys-384, Cys-346/Cys-368, and Cys-348/Cys-351. Asn-317 is a glycosylation site (N-linked (GlcNAc...) asparagine). Zn(2+) is bound at residue His-331. Glu-332 is a catalytic residue. Zn(2+)-binding residues include His-335 and His-341. An N-linked (GlcNAc...) asparagine glycan is attached at Asn-367. The Disintegrin domain occupies Pro-397 to Asn-483. Positions 399, 402, 404, 406, 409, and 412 each coordinate Ca(2+). 14 disulfides stabilise this stretch: Cys-400–Cys-429, Cys-411–Cys-424, Cys-413–Cys-419, Cys-423–Cys-446, Cys-437–Cys-443, Cys-442–Cys-468, Cys-455–Cys-475, Cys-462–Cys-494, Cys-487–Cys-499, Cys-506–Cys-556, Cys-521–Cys-565, Cys-534–Cys-544, Cys-551–Cys-587, and Cys-581–Cys-593. Positions Glu-461 to Asp-463 match the D/ECD-tripeptide motif. Asn-568 carries an N-linked (GlcNAc...) asparagine glycan.

It belongs to the venom metalloproteinase (M12B) family. P-III subfamily. P-IIIa sub-subfamily. As to quaternary structure, monomer. The cofactor is Zn(2+). In terms of tissue distribution, expressed by the venom gland.

Its subcellular location is the secreted. Functionally, this metalloproteinase-disintegrin-like impairs hemostasis in the envenomed animal. In Trimeresurus stejnegeri (Chinese green tree viper), this protein is Zinc metalloproteinase-disintegrin-like stejnihagin-A.